A 662-amino-acid polypeptide reads, in one-letter code: High affinity sulfate transporter 2 (662 aa).

Residues 1 to 35 (MSQRVSDQAMAEVIAETRTNSSSRRHGGGDDTPSL) form a disordered region. A run of 12 helical transmembrane segments spans residues 103-123 (GDFI…LAYA), 128-148 (LDPW…AFMG), 153-173 (IAIG…SNEI), 182-202 (LRLA…LGVC), 205-225 (GFLI…GAAI), 264-284 (WETI…KYIA), 291-311 (FWVS…FVYI), 346-366 (AGVR…MAIG), 383-403 (MVAM…VTTG), 420-440 (VSNI…TPLF), 447-467 (VLAS…AMVL), and 481-501 (GAFF…AVAI). One can recognise an STAS domain in the interval 532 to 655 (QYPKAEQIPG…LTVADAVATY (124 aa)).

It belongs to the SLC26A/SulP transporter (TC 2.A.53) family.

It localises to the membrane. High-affinity H(+)/sulfate cotransporter that mediates the uptake of sulfate by plant roots from low concentrations of sulfate in the soil solution. The protein is High affinity sulfate transporter 2 (ST2) of Stylosanthes hamata (Caribbean stylo).